The following is a 445-amino-acid chain: Glucose-6-phosphate isomerase (445 aa).

The Proton donor role is filled by Glu284. Residues His305 and Lys419 contribute to the active site.

The protein belongs to the GPI family.

The protein resides in the cytoplasm. The catalysed reaction is alpha-D-glucose 6-phosphate = beta-D-fructose 6-phosphate. It participates in carbohydrate biosynthesis; gluconeogenesis. Its pathway is carbohydrate degradation; glycolysis; D-glyceraldehyde 3-phosphate and glycerone phosphate from D-glucose: step 2/4. Catalyzes the reversible isomerization of glucose-6-phosphate to fructose-6-phosphate. This chain is Glucose-6-phosphate isomerase, found in Leptospira borgpetersenii serovar Hardjo-bovis (strain JB197).